Reading from the N-terminus, the 467-residue chain is ATP synthase subunit beta (467 aa).

153–160 (GGAGVGKT) provides a ligand contact to ATP.

The protein belongs to the ATPase alpha/beta chains family. In terms of assembly, F-type ATPases have 2 components, CF(1) - the catalytic core - and CF(0) - the membrane proton channel. CF(1) has five subunits: alpha(3), beta(3), gamma(1), delta(1), epsilon(1). CF(0) has three main subunits: a(1), b(2) and c(9-12). The alpha and beta chains form an alternating ring which encloses part of the gamma chain. CF(1) is attached to CF(0) by a central stalk formed by the gamma and epsilon chains, while a peripheral stalk is formed by the delta and b chains.

The protein resides in the cell membrane. The enzyme catalyses ATP + H2O + 4 H(+)(in) = ADP + phosphate + 5 H(+)(out). In terms of biological role, produces ATP from ADP in the presence of a proton gradient across the membrane. The catalytic sites are hosted primarily by the beta subunits. The protein is ATP synthase subunit beta of Lactiplantibacillus plantarum (strain ATCC BAA-793 / NCIMB 8826 / WCFS1) (Lactobacillus plantarum).